The primary structure comprises 65 residues: Large ribosomal subunit protein bL35 (65 aa).

Belongs to the bacterial ribosomal protein bL35 family.

This chain is Large ribosomal subunit protein bL35, found in Thermoanaerobacter sp. (strain X514).